A 100-amino-acid polypeptide reads, in one-letter code: Urease subunit gamma (100 aa).

This sequence belongs to the urease gamma subunit family. As to quaternary structure, heterotrimer of UreA (gamma), UreB (beta) and UreC (alpha) subunits. Three heterotrimers associate to form the active enzyme.

The protein resides in the cytoplasm. The enzyme catalyses urea + 2 H2O + H(+) = hydrogencarbonate + 2 NH4(+). It functions in the pathway nitrogen metabolism; urea degradation; CO(2) and NH(3) from urea (urease route): step 1/1. This chain is Urease subunit gamma, found in Burkholderia ambifaria (strain MC40-6).